The chain runs to 149 residues: 4-hydroxyphenylacetate 3-monooxygenase, reductase component (149 aa).

FAD is bound at residue 27 to 34 (ERGMTATA). Ser37 lines the NAD(+) pocket. Residues 48-50 (AVS), 54-55 (KL), and His80 each bind FAD. NAD(+)-binding positions include His116 and 137–140 (YFQR).

It belongs to the non-flavoprotein flavin reductase family. HpaC subfamily. Homodimer. 4-HPA 3-monooxygenase consists of a reductase component HpaC and an oxygenase component HpaB.

The enzyme catalyses a reduced flavin + NAD(+) = an oxidized flavin + NADH + 2 H(+). It functions in the pathway aromatic compound metabolism; 4-hydroxyphenylacetate degradation; pyruvate and succinate semialdehyde from 4-hydroxyphenylacetate: step 1/7. In terms of biological role, catalyzes the reduction of free flavins (FMN, FAD and riboflavin) by NADH. Subsequently, the reduced flavins diffuse to the large HpaB component. It utilizes NADH, but not NADPH as an electron donor, and both FAD and FMN as electron acceptors. The protein is 4-hydroxyphenylacetate 3-monooxygenase, reductase component of Thermus thermophilus (strain ATCC 27634 / DSM 579 / HB8).